We begin with the raw amino-acid sequence, 525 residues long: Cytochrome P450 4V2 (525 aa).

Residues 13–33 (LLLWGAASALSLAGASLVLSL) form a helical membrane-spanning segment. Positions 329 and 467 each coordinate heme.

This sequence belongs to the cytochrome P450 family. Heme serves as cofactor. Broadly expressed. Detected in heart, brain, placenta, lung, liver, skeletal muscle, kidney, pancreas, retina, retinal pigment epithelium (RPE) and lymphocytes.

The protein localises to the endoplasmic reticulum membrane. The catalysed reaction is dodecanoate + reduced [NADPH--hemoprotein reductase] + O2 = 12-hydroxydodecanoate + oxidized [NADPH--hemoprotein reductase] + H2O + H(+). It catalyses the reaction tetradecanoate + reduced [NADPH--hemoprotein reductase] + O2 = 14-hydroxytetradecanoate + oxidized [NADPH--hemoprotein reductase] + H2O + H(+). It carries out the reaction hexadecanoate + reduced [NADPH--hemoprotein reductase] + O2 = 16-hydroxyhexadecanoate + oxidized [NADPH--hemoprotein reductase] + H2O + H(+). The enzyme catalyses (5Z,8Z,11Z,14Z,17Z)-eicosapentaenoate + reduced [NADPH--hemoprotein reductase] + O2 = 20-hydroxy-(5Z,8Z,11Z,14Z,17Z)-eicosapentaenoate + oxidized [NADPH--hemoprotein reductase] + H2O + H(+). The catalysed reaction is (4Z,7Z,10Z,13Z,16Z,19Z)-docosahexaenoate + reduced [NADPH--hemoprotein reductase] + O2 = 22-hydroxy-(4Z,7Z,10Z,13Z,16Z,19Z)-docosahexaenoate + oxidized [NADPH--hemoprotein reductase] + H2O + H(+). Its pathway is lipid metabolism; fatty acid metabolism. Its activity is regulated as follows. Inhibited by N-hydroxy-N'-(4-n-butyl-2-methylphenyl formamidine)(HET0016) with an IC(50) of 38 nM. A cytochrome P450 monooxygenase involved in fatty acid metabolism in the eye. Catalyzes the omega-hydroxylation of polyunsaturated fatty acids (PUFAs) docosahexaenoate (DHA) and its precursor eicosapentaenoate (EPA), and may contribute to the homeostasis of these retinal PUFAs. Omega hydroxylates saturated fatty acids such as laurate, myristate and palmitate, the catalytic efficiency decreasing in the following order: myristate &gt; laurate &gt; palmitate (C14&gt;C12&gt;C16). Mechanistically, uses molecular oxygen inserting one oxygen atom into a substrate, and reducing the second into a water molecule, with two electrons provided by NADPH via cytochrome P450 reductase (CPR; NADPH-ferrihemoprotein reductase). This is Cytochrome P450 4V2 (CYP4V2) from Homo sapiens (Human).